A 265-amino-acid chain; its full sequence is Oxidoreductase nsrR (265 aa).

Belongs to the avfA family.

It functions in the pathway secondary metabolite biosynthesis. Its function is as follows. Oxidoreductase; part of the gene cluster that mediates the biosynthesis of the tetrahydroxanthone dimer neosartorin, which exhibits antibacterial activity. The two different monomeric units appear to be synthesized by the same set of enzymes, among which the Baeyer-Villiger monooxygenase nsrF is the key enzyme for the divergence of the biosynthetic routes. The pathway begins with the synthesis of atrochrysone thioester by the polyketide synthase nsrB. The atrochrysone carboxyl ACP thioesterase nsrC then breaks the thioester bond and releases the atrochrysone carboxylic acid from AacuL. Atrochrysone carboxylic acid is decarboxylated by the decarboxylase nsrE, and oxidized by the anthrone oxygenase nsrD to yield emodin. Emodin is then reduced to emodin hydroquinone by the oxidoreductase nsrR. A-ring reduction by the short chain dehydrogenase nsrJ, dehydration by the scytalone dehydratase-like protein nsrI and probable spontaneous re-oxidation, results in overall deoxygenation to chrysophanol. The Baeyer-Villiger monooxygenase nsrF accepts chrysophanol as a substrate to insert one oxygen atom at two different positions to yield the precursors of both monomric units. NsrF is promiscuous/flexible in interacting with the 2 (non methylated and methylated) aromatic rings of chrysophanol, thus diverging the biosynthetic pathway at this point. After the hydrolysis of the lactones, methylesterification by the methyltransferase nsrG yields respectively moniliphenone and 2,2',6'-trihydroxy-4-methyl-6-methoxya-cyldiphenylmethanone. The next steps are the hydroxylation by the FAD-dependent monooxygenase nsrK, followed by isomerization by the monooxygenase nsrQ. The short chain dehydrogenase/reductase nsrO then catalyzes the C-5 ketoreduction to give the xanthone skeleton of blennolide C and 5-acetylblennolide A. The acetyltransferase nsrL has a strict substrate specificity and uses only blennolide A but not blennolide C to yield 5-acetylblennolide A as the single-acetylated product. In the final step of the biosynthesis, the heterodimerization of the 2 xanthones, blennolide C and 5-acetylblennolide A, is catalyzed by the cytochrome P450 monooxygenase nsrP. NsrP can utilize at least three different xanthones as its substrates to perform the dimerization reaction. The chain is Oxidoreductase nsrR from Aspergillus novofumigatus (strain IBT 16806).